A 308-amino-acid polypeptide reads, in one-letter code: tRNA dimethylallyltransferase (308 aa).

Glycine 14–serine 21 contributes to the ATP binding site. Position 16–21 (threonine 16–serine 21) interacts with substrate. The tract at residues aspartate 39 to glutamine 42 is interaction with substrate tRNA.

The protein belongs to the IPP transferase family. In terms of assembly, monomer. The cofactor is Mg(2+).

It catalyses the reaction adenosine(37) in tRNA + dimethylallyl diphosphate = N(6)-dimethylallyladenosine(37) in tRNA + diphosphate. Its function is as follows. Catalyzes the transfer of a dimethylallyl group onto the adenine at position 37 in tRNAs that read codons beginning with uridine, leading to the formation of N6-(dimethylallyl)adenosine (i(6)A). The polypeptide is tRNA dimethylallyltransferase (Bradyrhizobium sp. (strain ORS 278)).